The sequence spans 269 residues: 5'-nucleotidase SurE (269 aa).

A divalent metal cation-binding residues include Asp-11, Asp-12, Ser-43, and Asn-101.

The protein belongs to the SurE nucleotidase family. It depends on a divalent metal cation as a cofactor.

Its subcellular location is the cytoplasm. The enzyme catalyses a ribonucleoside 5'-phosphate + H2O = a ribonucleoside + phosphate. In terms of biological role, nucleotidase that shows phosphatase activity on nucleoside 5'-monophosphates. The protein is 5'-nucleotidase SurE of Prochlorococcus marinus subsp. pastoris (strain CCMP1986 / NIES-2087 / MED4).